Here is a 403-residue protein sequence, read N- to C-terminus: Tyrosine--tRNA ligase (403 aa).

Positions 46 to 55 match the 'HIGH' region motif; it reads PTAPDLHLGH. Positions 230–234 match the 'KMSKS' region motif; it reads KMSKS. Residue lysine 233 coordinates ATP. Residues 342 to 402 enclose the S4 RNA-binding domain; the sequence is LFITQILNQA…GKKAYAKVTV (61 aa).

This sequence belongs to the class-I aminoacyl-tRNA synthetase family. TyrS type 2 subfamily. As to quaternary structure, homodimer.

Its subcellular location is the cytoplasm. It carries out the reaction tRNA(Tyr) + L-tyrosine + ATP = L-tyrosyl-tRNA(Tyr) + AMP + diphosphate + H(+). Its function is as follows. Catalyzes the attachment of tyrosine to tRNA(Tyr) in a two-step reaction: tyrosine is first activated by ATP to form Tyr-AMP and then transferred to the acceptor end of tRNA(Tyr). This is Tyrosine--tRNA ligase from Psychrobacter arcticus (strain DSM 17307 / VKM B-2377 / 273-4).